Here is a 119-residue protein sequence, read N- to C-terminus: Protein MGF 110-13L-B (119 aa).

The first 16 residues, 1-16 (MKLLALLCILIWLSQP), serve as a signal peptide directing secretion.

Belongs to the asfivirus MGF 110 family.

This Ornithodoros (relapsing fever ticks) protein is Protein MGF 110-13L-B.